The following is a 507-amino-acid chain: ATP synthase subunit alpha, chloroplastic (507 aa).

170 to 177 (GDRQTGKT) lines the ATP pocket.

The protein belongs to the ATPase alpha/beta chains family. In terms of assembly, F-type ATPases have 2 components, CF(1) - the catalytic core - and CF(0) - the membrane proton channel. CF(1) has five subunits: alpha(3), beta(3), gamma(1), delta(1), epsilon(1). CF(0) has four main subunits: a, b, b' and c.

The protein resides in the plastid. It localises to the chloroplast thylakoid membrane. The enzyme catalyses ATP + H2O + 4 H(+)(in) = ADP + phosphate + 5 H(+)(out). Its function is as follows. Produces ATP from ADP in the presence of a proton gradient across the membrane. The alpha chain is a regulatory subunit. In Daucus carota (Wild carrot), this protein is ATP synthase subunit alpha, chloroplastic.